Here is a 308-residue protein sequence, read N- to C-terminus: HTH-type transcriptional activator AllS (308 aa).

In terms of domain architecture, HTH lysR-type spans 2–59; sequence FDPETLRTFISVAETGSFSKAAERLCKTTATTSYRIKLLEENTGVGLFFRTTRSVSLT. The segment at residues 19-38 is a DNA-binding region (H-T-H motif); the sequence is FSKAAERLCKTTATTSYRIK.

It belongs to the LysR transcriptional regulatory family.

Functionally, positive regulator essential for the expression of allD operon. Binds to the allD promoter. This is HTH-type transcriptional activator AllS (allS) from Salmonella typhi.